Here is a 66-residue protein sequence, read N- to C-terminus: Moricin-2 (66 aa).

The signal sequence occupies residues 1–24 (MNILKLFFVFIVAMSLVSCSTAAP).

Expressed in fat body and to a lesser extent in hemocyte and Malpighian tubules.

Its subcellular location is the secreted. Has antibacterial activity against Gram-positive and Gram-negative bacteria. Probably acts by disturbing membrane functions with its amphipathic structure. The polypeptide is Moricin-2 (MOR2) (Bombyx mori (Silk moth)).